Reading from the N-terminus, the 365-residue chain is Peptide chain release factor 2 (365 aa).

Position 252 is an N5-methylglutamine (Gln-252).

Belongs to the prokaryotic/mitochondrial release factor family. In terms of processing, methylated by PrmC. Methylation increases the termination efficiency of RF2.

The protein localises to the cytoplasm. Its function is as follows. Peptide chain release factor 2 directs the termination of translation in response to the peptide chain termination codons UGA and UAA. The polypeptide is Peptide chain release factor 2 (Proteus mirabilis (strain HI4320)).